The chain runs to 158 residues: Endoribonuclease YbeY (158 aa).

His-119, His-123, and Asp-129 together coordinate Zn(2+).

It belongs to the endoribonuclease YbeY family. Requires Zn(2+) as cofactor.

It localises to the cytoplasm. Functionally, single strand-specific metallo-endoribonuclease involved in late-stage 70S ribosome quality control and in maturation of the 3' terminus of the 16S rRNA. This is Endoribonuclease YbeY from Chlamydia caviae (strain ATCC VR-813 / DSM 19441 / 03DC25 / GPIC) (Chlamydophila caviae).